Reading from the N-terminus, the 301-residue chain is MSEDIRRGPGRPPKKRVVPNFERKGILEKPVRPQSRLEFSYDNPLIFKNLFIYFKNLKSKNILVRCTPTEITFFSRDQSQASFVIATIDGKNVNHYYASDVFWLGINRELVEKMFNSIDRSFLKITIVHRYDKPETLFFIFTDFDIDKECTYQITVSEPELDMDLIEMEKSISEERLKNYPLRWEFTSKQLKKTFSDLSNYTELVTIEKLGGDTPLHLYFQKFNSISYHEMYKSSNKINLTSTIPKSQVFQINVKIAHIKSLASAMVTDKIRILCEENGNLIFQSEMDALLLNTITLNNMI.

The protein belongs to the asfivirus E301R family. As to quaternary structure, interacts with host IRF3.

Functionally, plays a role in the inhibition of host innate immune system by acting as a negatively regulator of type I interferon production. Mechanistically, interacts with and prevents host IRF3 nuclear localization to inhibit its transcriptional activity. This is an uncharacterized protein from African swine fever virus (isolate Pig/Kenya/KEN-50/1950) (ASFV).